Reading from the N-terminus, the 399-residue chain is MAKEKYERTKPHVNIGTIGHVDHGKTTLTAAISKVLHEEFPDVNPEYDFNQIDSAPEEAARGITINIAHIEYQTEKRHYAHVDCPGHADFVKNMITGAAQMDGAILVVAATDGPMAQTREHVLLARQVGVPKILVALNKCDMVDDEELIELVEEEVRDLLDENGFDRDCPVIHTSAYGALHDDAPDHEKWVQSVKDLMDAVDDYIPTPVHDLDKPFLMPIEDVFTISGRGTVVTGRVERGQLAVNTPVEIVGIRPTQQTTVTSIETFHKTMDACEAGDNTGLLLRGLGRDDVERGQVVAKPGSVTPHTKFEGEVYVLTKDEGGRHSPFFSNYRPQFYFRTTDVTGVIELPEGVEMVQPGDHATFTVELIQPIAMEEGLTFAVREGGHTVGSGRVTKILA.

The tr-type G domain occupies Lys10–Val209. The G1 stretch occupies residues Gly19–Thr26. A GTP-binding site is contributed by Gly19–Thr26. Thr26 contacts Mg(2+). The interval Gly62–Asn66 is G2. Residues Asp83–Gly86 form a G3 region. Residues Asp83–His87 and Asn138–Asp141 contribute to the GTP site. The tract at residues Asn138 to Asp141 is G4. Positions Ser175 to Tyr177 are G5.

It belongs to the TRAFAC class translation factor GTPase superfamily. Classic translation factor GTPase family. EF-Tu/EF-1A subfamily. In terms of assembly, monomer.

It is found in the cytoplasm. It carries out the reaction GTP + H2O = GDP + phosphate + H(+). In terms of biological role, GTP hydrolase that promotes the GTP-dependent binding of aminoacyl-tRNA to the A-site of ribosomes during protein biosynthesis. This chain is Elongation factor Tu, found in Bifidobacterium longum (strain DJO10A).